Reading from the N-terminus, the 123-residue chain is Large-conductance mechanosensitive channel (123 aa).

2 consecutive transmembrane segments (helical) span residues 14 to 34 (VLDL…VTSL) and 67 to 87 (GNFI…FLLV).

The protein belongs to the MscL family. Homopentamer.

The protein resides in the cell membrane. In terms of biological role, channel that opens in response to stretch forces in the membrane lipid bilayer. May participate in the regulation of osmotic pressure changes within the cell. This is Large-conductance mechanosensitive channel from Lacticaseibacillus casei (strain BL23) (Lactobacillus casei).